A 329-amino-acid polypeptide reads, in one-letter code: MKLAVYSTKQYDKKYLQQVNESFGFELEFFDFLLTEKTAKTANGCEAVCIFVNDDGSRPVLEELKKHGVKYIALRCAGFNNVDLDAAKELGLKVVRVPAYDPEAVAEHAIGMMMTLNRRIHRAYQRTRDANFSLEGLTGFTMYGKTAGVIGTGKIGVAMLRILKGFGMRLLAFDPYPSAAALELGVEYVDLPTLFSESDVISLHCPLTPENYHLLNEAAFEQMKNGVMIVNTSRGALIDSQAAIEALKNQKIGSLGMDVYENERDLFFEDKSNDVIQDDVFRRLSACHNVLFTGHQAFLTAEALTSISQTTLQNLSNLEKGETCPNELV.

NAD(+) is bound by residues 154–155 (KI), aspartate 174, 205–206 (CP), asparagine 211, 232–234 (TSR), and aspartate 258. Arginine 234 is a catalytic residue. Glutamate 263 is a catalytic residue. Catalysis depends on histidine 295, which acts as the Proton donor.

Belongs to the D-isomer specific 2-hydroxyacid dehydrogenase family.

The enzyme catalyses (R)-lactate + NAD(+) = pyruvate + NADH + H(+). Functionally, fermentative lactate dehydrogenase. This is D-lactate dehydrogenase (ldhA) from Escherichia coli (strain K12).